We begin with the raw amino-acid sequence, 273 residues long: Large ribosomal subunit protein uL2 (273 aa).

2 disordered regions span residues 31–50 (APLLDSKSKTGGRNNLGRIT) and 221–273 (RGTA…RRGK). Positions 253–273 (KGKKTRHNKRTDKYIVRRRGK) are enriched in basic residues.

It belongs to the universal ribosomal protein uL2 family. As to quaternary structure, part of the 50S ribosomal subunit. Forms a bridge to the 30S subunit in the 70S ribosome.

In terms of biological role, one of the primary rRNA binding proteins. Required for association of the 30S and 50S subunits to form the 70S ribosome, for tRNA binding and peptide bond formation. It has been suggested to have peptidyltransferase activity; this is somewhat controversial. Makes several contacts with the 16S rRNA in the 70S ribosome. This is Large ribosomal subunit protein uL2 from Actinobacillus pleuropneumoniae serotype 7 (strain AP76).